Here is a 77-residue protein sequence, read N- to C-terminus: Putative snRNP Sm-like protein (77 aa).

A Sm domain is found at 4 to 76 (RPLDVLNRSL…VVFVSPAPGG (73 aa)).

Belongs to the snRNP Sm proteins family.

This Archaeoglobus fulgidus (strain ATCC 49558 / DSM 4304 / JCM 9628 / NBRC 100126 / VC-16) protein is Putative snRNP Sm-like protein.